Reading from the N-terminus, the 431-residue chain is Cortical fragment-lytic enzyme (431 aa).

LysM domains follow at residues 2–46 (QIYV…TIVI) and 51–95 (QFYD…RLYI). Residues 103 to 431 (IESNAYLEPR…QFNVVKKTFR (329 aa)) form the GH18 domain. Chitin contacts are provided by residues 148–149 (VA) and 174–177 (ENQA). Glu-217 (proton donor) is an active-site residue. Residues Tyr-218, 280-283 (MTYE), and Trp-406 each bind chitin.

It belongs to the glycosyl hydrolase 18 family. Chitinase class II subfamily.

Its subcellular location is the spore coat. Its function is as follows. N-acetylglucosaminidase involved in cortex peptidoglycan degradation during germination. Cleaves only partially degraded spore peptidoglycans. Recognizes muramic acid delta-lactam residues specific to spore peptidoglycans. The protein is Cortical fragment-lytic enzyme of Bacillus subtilis (strain 168).